Reading from the N-terminus, the 392-residue chain is 2-oxoisovalerate dehydrogenase subunit beta, mitochondrial (392 aa).

Residues 1-50 (MAVVAAAAGWLLRLRAAGAEGHWRRLPGAGLARGFLHPAATVEDAAQRRQ) constitute a mitochondrion transit peptide. Tyr-152 contacts thiamine diphosphate. Gly-178, Leu-180, Thr-181, Cys-228, and Asp-231 together coordinate K(+). Lys-232 carries the N6-acetyllysine modification. K(+) is bound at residue Asn-233. Lys-241 carries the post-translational modification N6-acetyllysine.

As to quaternary structure, heterotetramer of 2 alpha/BCKDHA and 2 beta chains/BCKDHB that forms the branched-chain alpha-keto acid decarboxylase (E1) component of the BCKD complex. The branched-chain alpha-ketoacid dehydrogenase is a large complex composed of three major building blocks E1, E2 and E3. It is organized around E2, a 24-meric cubic core composed of DBT, to which are associated 6 to 12 copies of E1, and approximately 6 copies of the dehydrogenase E3, a DLD dimer. Requires thiamine diphosphate as cofactor.

Its subcellular location is the mitochondrion matrix. The enzyme catalyses N(6)-[(R)-lipoyl]-L-lysyl-[protein] + 3-methyl-2-oxobutanoate + H(+) = N(6)-[(R)-S(8)-2-methylpropanoyldihydrolipoyl]-L-lysyl-[protein] + CO2. Its function is as follows. Together with BCKDHA forms the heterotetrameric E1 subunit of the mitochondrial branched-chain alpha-ketoacid dehydrogenase (BCKD) complex. The BCKD complex catalyzes the multi-step oxidative decarboxylation of alpha-ketoacids derived from the branched-chain amino-acids valine, leucine and isoleucine producing CO2 and acyl-CoA which is subsequently utilized to produce energy. The E1 subunit catalyzes the first step with the decarboxylation of the alpha-ketoacid forming an enzyme-product intermediate. A reductive acylation mediated by the lipoylamide cofactor of E2 extracts the acyl group from the E1 active site for the next step of the reaction. This is 2-oxoisovalerate dehydrogenase subunit beta, mitochondrial from Homo sapiens (Human).